Here is a 340-residue protein sequence, read N- to C-terminus: Phosphatidylglycerol--prolipoprotein diacylglyceryl transferase (340 aa).

Helical transmembrane passes span Ile-19–Gly-39, Ala-54–Ile-74, Ile-93–Ile-113, and Gly-119–Phe-139. Arg-141 contributes to the a 1,2-diacyl-sn-glycero-3-phospho-(1'-sn-glycerol) binding site. The next 3 membrane-spanning stretches (helical) occupy residues His-176–Ala-196, Leu-202–Trp-221, and Leu-238–Ser-258. The disordered stretch occupies residues Glu-266–Val-340. A compositionally biased stretch (basic and acidic residues) spans Asp-284–Thr-294. Low complexity predominate over residues Asp-295–Asp-307. Basic and acidic residues predominate over residues Pro-326 to Val-340.

The protein belongs to the Lgt family.

The protein resides in the cell membrane. It carries out the reaction L-cysteinyl-[prolipoprotein] + a 1,2-diacyl-sn-glycero-3-phospho-(1'-sn-glycerol) = an S-1,2-diacyl-sn-glyceryl-L-cysteinyl-[prolipoprotein] + sn-glycerol 1-phosphate + H(+). It participates in protein modification; lipoprotein biosynthesis (diacylglyceryl transfer). Its function is as follows. Catalyzes the transfer of the diacylglyceryl group from phosphatidylglycerol to the sulfhydryl group of the N-terminal cysteine of a prolipoprotein, the first step in the formation of mature lipoproteins. This Streptomyces avermitilis (strain ATCC 31267 / DSM 46492 / JCM 5070 / NBRC 14893 / NCIMB 12804 / NRRL 8165 / MA-4680) protein is Phosphatidylglycerol--prolipoprotein diacylglyceryl transferase.